The chain runs to 155 residues: Protein U1 (155 aa).

It belongs to the nanovirus U1 protein family.

This chain is Protein U1 (DNA-U1), found in Cicer arietinum (Chickpea).